The primary structure comprises 836 residues: Neuroligin-2 (836 aa).

An N-terminal signal peptide occupies residues 1 to 14 (MWLLALCLVGLAGA). At 15–678 (QRGGGGPGGG…DSRDYSTELS (664 aa)) the chain is on the extracellular side. N98 and N136 each carry an N-linked (GlcNAc...) asparagine glycan. Disulfide bonds link C106-C141, C317-C328, and C487-C521. The N-linked (GlcNAc...) asparagine glycan is linked to N522. The disordered stretch occupies residues 623–661 (PPYATRWPPRTPGPGTSGTRRPPPPATLPPESDIDLGPR). Residues 679 to 699 (VTVAVGASLLFLNILAFAALY) traverse the membrane as a helical segment. The tract at residues 679–699 (VTVAVGASLLFLNILAFAALY) is required for interaction with LHFPL4. At 700 to 836 (YKRDRRQELR…LPHPHSTTRV (137 aa)) the chain is on the cytoplasmic side. Disordered stretches follow at residues 711 to 735 (RRLS…TAGR) and 791 to 836 (LLPS…TTRV). S714 and S719 each carry phosphoserine. Over residues 717–728 (GGSGSGVPGGGP) the composition is skewed to gly residues. The segment covering 796 to 819 (LGPPPPPPPPSLHPFGPFPPPPPT) has biased composition (pro residues). Residues 824–836 (NNTLPHPHSTTRV) are compositionally biased toward polar residues.

The protein belongs to the type-B carboxylesterase/lipase family. As to quaternary structure, interacts with neurexins NRXN1, NRXN2 and NRXN3. Interaction with neurexins is mediated by heparan sulfate glycan modification on neurexin. Interacts (via its C-terminus) with DLG4/PSD-95 (via PDZ domain 3). Interacts with PATJ. Interacts with GPHN. Interacts with MDGA1 and MDGA2. Found in a complex with MAGI2 and IGSF9B, where it interacts with MAGI2 (via WW 1, WW 2 and PDZ 2 domains). Identified in a complex of 720 kDa composed of LHFPL4, NLGN2, GABRA1, GABRB2, GABRG2 and GABRB3. Interacts with LHFPL4; leading to mutual regulation of the protein level and synaptic clustering. Interacts with GABRA1. In terms of tissue distribution, detected on hippocampus neurons, especially at inhibitory synapses. Detected in retina, in the outer and inner plexiform layer. Detected in pancreas, in islet of Langerhans beta cells (at protein level). Expressed in brain, spinal cord and dorsal root ganglion. Detected in brain, and at lower levels in pancreas islet beta cells.

The protein resides in the cell membrane. The protein localises to the postsynaptic cell membrane. It localises to the presynaptic cell membrane. In terms of biological role, transmembrane scaffolding protein involved in cell-cell interactions via its interactions with neurexin family members. Mediates cell-cell interactions both in neurons and in other types of cells, such as Langerhans beta cells. Plays a role in synapse function and synaptic signal transmission, especially via gamma-aminobutyric acid receptors (GABA(A) receptors). Functions by recruiting and clustering synaptic proteins. Promotes clustering of postsynaptic GABRG2 and GPHN. Promotes clustering of postsynaptic LHFPL4. Modulates signaling by inhibitory synapses, and thereby plays a role in controlling the ratio of signaling by excitatory and inhibitory synapses and information processing. Required for normal signal amplitude from inhibitory synapses, but is not essential for normal signal frequency. May promote the initial formation of synapses, but is not essential for this. In vitro, triggers the de novo formation of presynaptic structures. Mediates cell-cell interactions between Langerhans beta cells and modulates insulin secretion. In Rattus norvegicus (Rat), this protein is Neuroligin-2 (Nlgn2).